Reading from the N-terminus, the 476-residue chain is Cysteine--tRNA ligase (476 aa).

C31 is a Zn(2+) binding site. The 'HIGH' region signature appears at 33 to 43 (PTVYNYAHIGN). Zn(2+) contacts are provided by C211, H236, and E240. The 'KMSKS' region signature appears at 269–273 (KMSKS). Residue K272 participates in ATP binding.

This sequence belongs to the class-I aminoacyl-tRNA synthetase family. In terms of assembly, monomer. Zn(2+) serves as cofactor.

It is found in the cytoplasm. It carries out the reaction tRNA(Cys) + L-cysteine + ATP = L-cysteinyl-tRNA(Cys) + AMP + diphosphate. In Xanthomonas oryzae pv. oryzae (strain MAFF 311018), this protein is Cysteine--tRNA ligase.